The chain runs to 1386 residues: DNA-directed RNA polymerase subunit beta'' (1386 aa).

4 residues coordinate Zn(2+): cysteine 220, cysteine 291, cysteine 298, and cysteine 301.

This sequence belongs to the RNA polymerase beta' chain family. RpoC2 subfamily. As to quaternary structure, in plastids the minimal PEP RNA polymerase catalytic core is composed of four subunits: alpha, beta, beta', and beta''. When a (nuclear-encoded) sigma factor is associated with the core the holoenzyme is formed, which can initiate transcription. Requires Zn(2+) as cofactor.

The protein localises to the plastid. Its subcellular location is the chloroplast. It catalyses the reaction RNA(n) + a ribonucleoside 5'-triphosphate = RNA(n+1) + diphosphate. DNA-dependent RNA polymerase catalyzes the transcription of DNA into RNA using the four ribonucleoside triphosphates as substrates. In Glycine max (Soybean), this protein is DNA-directed RNA polymerase subunit beta''.